Consider the following 143-residue polypeptide: Transcriptional regulator MraZ (143 aa).

SpoVT-AbrB domains lie at Thr5–Glu47 and Thr76–Ala119.

This sequence belongs to the MraZ family. Forms oligomers.

It localises to the cytoplasm. It is found in the nucleoid. The chain is Transcriptional regulator MraZ from Mycobacterium ulcerans (strain Agy99).